Reading from the N-terminus, the 523-residue chain is Jerky protein homolog-like (523 aa).

The HTH psq-type domain maps to 1-52; it reads MSGKRKRVVLTIKDKLDIIKKLEDGGSSKQLAVIYGIGETTVRDIRKNKEKI. 2 DNA-binding regions (H-T-H motif) span residues 28 to 48 and 100 to 132; these read SKQL…IRKN and PICA…FKQR. The HTH CENPB-type domain maps to 67–139; the sequence is KRKSMKPSMY…KQRHSIREIN (73 aa). Residues 168 to 385 enclose the DDE-1 domain; the sequence is LQPEQIYNAD…VKPVTISRAW (218 aa).

This sequence belongs to the tigger transposable element derived protein family.

The protein resides in the nucleus. The sequence is that of Jerky protein homolog-like (Jrkl) from Mus musculus (Mouse).